The primary structure comprises 296 residues: Chelated iron transport system membrane protein YfeB (296 aa).

The ABC transporter domain maps to 11-246; that stretch reads LVVDNVTVTY…NLEMTFGGVL (236 aa). An ATP-binding site is contributed by 44–51; the sequence is GVNGSGKS. The interval 276 to 296 is disordered; sequence VFYGHTKNDPPAQSQSKEQNS. Residues 286 to 296 show a composition bias toward polar residues; that stretch reads PAQSQSKEQNS.

It belongs to the ABC transporter superfamily.

It is found in the cell inner membrane. Functionally, part of an ATP-driven transport system YfeABCD for chelated iron. This Yersinia pestis protein is Chelated iron transport system membrane protein YfeB (yfeB).